The sequence spans 207 residues: Large ribosomal subunit protein uL4 (207 aa).

Residues 58–78 are disordered; that stretch reads AGGGKKPWRQKGTGRARHGSI. Over residues 63–77 the composition is skewed to basic residues; the sequence is KPWRQKGTGRARHGS.

This sequence belongs to the universal ribosomal protein uL4 family. Part of the 50S ribosomal subunit.

In terms of biological role, one of the primary rRNA binding proteins, this protein initially binds near the 5'-end of the 23S rRNA. It is important during the early stages of 50S assembly. It makes multiple contacts with different domains of the 23S rRNA in the assembled 50S subunit and ribosome. Its function is as follows. Forms part of the polypeptide exit tunnel. The polypeptide is Large ribosomal subunit protein uL4 (Aster yellows witches'-broom phytoplasma (strain AYWB)).